We begin with the raw amino-acid sequence, 179 residues long: Adenine phosphoribosyltransferase (179 aa).

The protein belongs to the purine/pyrimidine phosphoribosyltransferase family. In terms of assembly, homodimer.

The protein localises to the cytoplasm. It carries out the reaction AMP + diphosphate = 5-phospho-alpha-D-ribose 1-diphosphate + adenine. It functions in the pathway purine metabolism; AMP biosynthesis via salvage pathway; AMP from adenine: step 1/1. In terms of biological role, catalyzes a salvage reaction resulting in the formation of AMP, that is energically less costly than de novo synthesis. This is Adenine phosphoribosyltransferase from Haemophilus ducreyi (strain 35000HP / ATCC 700724).